We begin with the raw amino-acid sequence, 681 residues long: Translation factor GUF1 homolog, chloroplastic (681 aa).

A chloroplast-targeting transit peptide spans 1-51 (MAMASAMDLSSPPTFFLSGTSTSSPSLRRLSSISVSGFRRHSNRKLQILCQ). In terms of domain architecture, tr-type G spans 84 to 265 (SNIRNFSIIA…AIVQRIPAPL (182 aa)). GTP-binding positions include 93-100 (AHIDHGKS), 158-162 (DTPGH), and 212-215 (NKID).

Belongs to the TRAFAC class translation factor GTPase superfamily. Classic translation factor GTPase family. LepA subfamily.

Its subcellular location is the plastid. It localises to the chloroplast. It catalyses the reaction GTP + H2O = GDP + phosphate + H(+). In terms of biological role, promotes chloroplast protein synthesis. May act as a fidelity factor of the translation reaction, by catalyzing a one-codon backward translocation of tRNAs on improperly translocated ribosomes. The protein is Translation factor GUF1 homolog, chloroplastic of Arabidopsis thaliana (Mouse-ear cress).